Reading from the N-terminus, the 217-residue chain is Adenylate kinase (217 aa).

An ATP-binding site is contributed by 10–15 (GAGKGT). An NMP region spans residues 30–59 (STGDIFRSNVSQGTPLGVQAKRYMDAGELV). Residues Thr31, Arg36, 57–59 (ELV), 85–88 (GFPR), and Gln92 contribute to the AMP site. The segment at 126-163 (GRRTCRGCGKVWHVEFDAPSQEGRCDRCGAELFQRDDD) is LID. Arg127 is a binding site for ATP. The Zn(2+) site is built by Cys130, Cys133, Cys150, and Cys153. Arg160 and Arg171 together coordinate AMP. Gly199 lines the ATP pocket.

This sequence belongs to the adenylate kinase family. Monomer.

It localises to the cytoplasm. The enzyme catalyses AMP + ATP = 2 ADP. The protein operates within purine metabolism; AMP biosynthesis via salvage pathway; AMP from ADP: step 1/1. Its function is as follows. Catalyzes the reversible transfer of the terminal phosphate group between ATP and AMP. Plays an important role in cellular energy homeostasis and in adenine nucleotide metabolism. This is Adenylate kinase from Salinispora tropica (strain ATCC BAA-916 / DSM 44818 / JCM 13857 / NBRC 105044 / CNB-440).